A 2388-amino-acid chain; its full sequence is Highly reducing polyketide synthase Preu1 (2388 aa).

The Ketosynthase family 3 (KS3) domain occupies 7–432 (NDDIAIVGLA…GTNAHVILDD (426 aa)). Active-site for beta-ketoacyl synthase activity residues include C180, H315, and H355. A malonyl-CoA:ACP transacylase (MAT) domain region spans residues 549–875 (GFVFTGQGAQ…SSVLMRGEDG (327 aa)). S641 (for malonyltransferase activity) is an active-site residue. The interval 940-1074 (HDLLGAPTQD…GLGKIHYRPE (135 aa)) is N-terminal hotdog fold. The region spanning 940 to 1256 (HDLLGAPTQD…CRELPNGNSQ (317 aa)) is the PKS/mFAS DH domain. The segment at 941-1251 (DLLGAPTQDS…VEGLRCRELP (311 aa)) is dehydratase (DH) domain. H972 (proton acceptor; for dehydratase activity) is an active-site residue. Residues 1102 to 1256 (TASISPVDFY…CRELPNGNSQ (155 aa)) form a C-terminal hotdog fold region. Catalysis depends on D1167, which acts as the Proton donor; for dehydratase activity. Positions 1676–1983 (KLPSDARFTS…VPTGLGKAVL (308 aa)) are enoyl reductase (ER) domain. Positions 2007–2191 (ATYVLAGGLG…AATSVDLGLM (185 aa)) are ketoreductase (KR) domain. Residues 2303 to 2380 (QANGIVLEAL…ALAEKISKAS (78 aa)) enclose the Carrier domain. Residue S2340 is modified to O-(pantetheine 4'-phosphoryl)serine.

Pantetheine 4'-phosphate serves as cofactor.

In terms of biological role, highly reducing polyketide synthase; part of a gene cluster that mediates the biosynthesis of a yet unidentified natural product. This Preussia isomera (Coprophilous fungus) protein is Highly reducing polyketide synthase Preu1.